We begin with the raw amino-acid sequence, 312 residues long: Holliday junction branch migration complex subunit RuvB (312 aa).

Residues 1–168 are large ATPase domain (RuvB-L); that stretch reads MKTNYEFRPQ…FGHIFHLNEY (168 aa). ATP contacts are provided by residues R8, G49, K52, T53, T54, 115-117, R158, Y168, and R206; that span reads EDF. Residue T53 participates in Mg(2+) binding. The tract at residues 169-234 is small ATPAse domain (RuvB-S); the sequence is EPSEISAIIL…DIKNIFKKIQ (66 aa). The tract at residues 237 to 312 is head domain (RuvB-H); that stretch reads EFGLDEQDIN…DFLKNNQLIK (76 aa). Residues K290 and R295 each contribute to the DNA site.

The protein belongs to the RuvB family. In terms of assembly, homohexamer. Forms an RuvA(8)-RuvB(12)-Holliday junction (HJ) complex. HJ DNA is sandwiched between 2 RuvA tetramers; dsDNA enters through RuvA and exits via RuvB. An RuvB hexamer assembles on each DNA strand where it exits the tetramer. Each RuvB hexamer is contacted by two RuvA subunits (via domain III) on 2 adjacent RuvB subunits; this complex drives branch migration. In the full resolvosome a probable DNA-RuvA(4)-RuvB(12)-RuvC(2) complex forms which resolves the HJ.

The protein resides in the cytoplasm. It carries out the reaction ATP + H2O = ADP + phosphate + H(+). In terms of biological role, the RuvA-RuvB-RuvC complex processes Holliday junction (HJ) DNA during genetic recombination and DNA repair, while the RuvA-RuvB complex plays an important role in the rescue of blocked DNA replication forks via replication fork reversal (RFR). RuvA specifically binds to HJ cruciform DNA, conferring on it an open structure. The RuvB hexamer acts as an ATP-dependent pump, pulling dsDNA into and through the RuvAB complex. RuvB forms 2 homohexamers on either side of HJ DNA bound by 1 or 2 RuvA tetramers; 4 subunits per hexamer contact DNA at a time. Coordinated motions by a converter formed by DNA-disengaged RuvB subunits stimulates ATP hydrolysis and nucleotide exchange. Immobilization of the converter enables RuvB to convert the ATP-contained energy into a lever motion, pulling 2 nucleotides of DNA out of the RuvA tetramer per ATP hydrolyzed, thus driving DNA branch migration. The RuvB motors rotate together with the DNA substrate, which together with the progressing nucleotide cycle form the mechanistic basis for DNA recombination by continuous HJ branch migration. Branch migration allows RuvC to scan DNA until it finds its consensus sequence, where it cleaves and resolves cruciform DNA. This Ureaplasma parvum serovar 3 (strain ATCC 27815 / 27 / NCTC 11736) protein is Holliday junction branch migration complex subunit RuvB.